Here is a 357-residue protein sequence, read N- to C-terminus: bZIP transcription factor 23 (357 aa).

Residues 166-185 are disordered; sequence PPVPPAPTPTAAAVPPPPPP. The bZIP domain occupies 275 to 338; sequence VERRQRRMIK…KNEVLERMSR (64 aa). The segment at 277 to 296 is basic motif; the sequence is RRQRRMIKNRESAARSRQRK. The segment at 303–317 is leucine-zipper; it reads LEAEVAKLKELNDEL.

Belongs to the bZIP family. ABI5 subfamily. As to expression, highly expressed in leaves.

It is found in the nucleus. Its function is as follows. Transcriptional activator that mediates abscisic acid (ABA) signaling. Can regulate the expression of a wide spectrum of stress-related genes in response to abiotic stresses through an ABA-dependent regulation pathway. Confers ABA-dependent drought and salinity tolerance. Binds specifically to the ABA-responsive elements (ABRE) in the promoter of target genes to mediate stress-responsive ABA signaling. This Oryza sativa subsp. japonica (Rice) protein is bZIP transcription factor 23.